A 163-amino-acid polypeptide reads, in one-letter code: Disulfide bond formation protein B (163 aa).

The Cytoplasmic segment spans residues Met-1–Ile-9. Residues Gln-10–Tyr-26 traverse the membrane as a helical segment. Topologically, residues Leu-27–Val-44 are periplasmic. A disulfide bridge connects residues Cys-36 and Cys-39. The helical transmembrane segment at Cys-45–Gly-58 threads the bilayer. The Cytoplasmic portion of the chain corresponds to Thr-59–His-64. Residues Ile-65 to Leu-82 form a helical membrane-spanning segment. Over Arg-83–Gly-139 the chain is Periplasmic. Cys-98 and Cys-125 are oxidised to a cystine. The chain crosses the membrane as a helical span at residues Trp-140 to Arg-158. The Cytoplasmic segment spans residues Thr-159–Asn-163.

It belongs to the DsbB family.

Its subcellular location is the cell inner membrane. In terms of biological role, required for disulfide bond formation in some periplasmic proteins. Acts by oxidizing the DsbA protein. The chain is Disulfide bond formation protein B from Legionella pneumophila (strain Lens).